Consider the following 1912-residue polypeptide: Protein javelin (1912 aa).

10 disordered regions span residues 1 to 32 (MGNG…QHNY), 89 to 145 (GTGL…VGGA), 298 to 377 (RSRH…HRLS), 460 to 515 (QSRR…SLSE), 545 to 586 (TTRT…TLRQ), 764 to 920 (SYNQ…EAPV), 965 to 1010 (IQEN…GKPL), 1257 to 1297 (GINS…GGAA), 1486 to 1507 (EQQE…QYED), and 1881 to 1912 (YDPS…DDKM). 2 stretches are compositionally biased toward basic residues: residues 97–133 (QQLH…HPHA) and 299–313 (SRHK…KKPP). A compositionally biased stretch (polar residues) spans 339 to 354 (ADDTQSQRSNSATCDS). A compositionally biased stretch (low complexity) spans 355–374 (HQQQQQQQHQPQQQHQQQQH). Residues 489–498 (EHSQSSVFPE) show a composition bias toward polar residues. Residues 499–512 (TTTSNSDDQTDSPS) show a composition bias toward low complexity. A compositionally biased stretch (acidic residues) spans 553–566 (SEEGEEEQTGEEVV). Residues 568 to 586 (SLTTPTEPQTSDSESTLRQ) are compositionally biased toward polar residues. 2 stretches are compositionally biased toward basic and acidic residues: residues 772-792 (QRKE…DSIR) and 802-869 (RQRE…RKEE). Over residues 890–904 (SQQEDTVADVEEEDN) the composition is skewed to acidic residues. Over residues 965-979 (IQENKETSQRIEPKP) the composition is skewed to basic and acidic residues. The span at 981–990 (PKTNSNSSST) shows a compositional bias: low complexity. 2 stretches are compositionally biased toward acidic residues: residues 1494–1507 (LEEE…QYED) and 1903–1912 (ELYDSLDDKM).

The protein resides in the cytoplasm. It is found in the cytoskeleton. Functionally, important for normal assembly of actin bundles during bristle formation. This is Protein javelin from Drosophila melanogaster (Fruit fly).